Here is a 407-residue protein sequence, read N- to C-terminus: MKPTVWHHLRLCPHGHPDETIDDAAIAVDETGTIAWLGALSALPHGYAHWQREDLHGAWVTPGLVDCHTHLVYGGTRADEFAQRLAGVSYEEIARQGGGIVSTVRATRAADETTLFVQAAARLQPLLAEGVTAIEIKSGYGLDLASERKMLRVARQLGERFPVTVYTTFLGAHALPPEYAGRADEYIDEVCDRMLPTLADEGLVDAVDVFCERIGFSLAQTERVFEAATRRGLPVKLHAEQLSNAGGTALAARYRALSADHLEFLDEAGIEAMKAAGTVAVLLPGAYYFIRETQLPPIDLLRKHGVPIALATDHNPGTSPLESLLLTLNMGCTLFRMTVPEVLQGVTRHAAAALGRADRHGALEVGRQADFAAWSVGSLAELAYWIGRPLCEQVVRGGTPVFRRMNG.

Positions 68 and 70 each coordinate Fe(3+). 2 residues coordinate Zn(2+): His-68 and His-70. Residues Arg-77, Tyr-140, and His-173 each coordinate 4-imidazolone-5-propanoate. Tyr-140 contacts N-formimidoyl-L-glutamate. His-238 is a binding site for Fe(3+). His-238 is a Zn(2+) binding site. Gln-241 is a binding site for 4-imidazolone-5-propanoate. Asp-313 is a Fe(3+) binding site. Asp-313 lines the Zn(2+) pocket. N-formimidoyl-L-glutamate is bound by residues Asn-315 and Gly-317. Thr-318 contributes to the 4-imidazolone-5-propanoate binding site.

Belongs to the metallo-dependent hydrolases superfamily. HutI family. Zn(2+) is required as a cofactor. Requires Fe(3+) as cofactor.

It is found in the cytoplasm. It carries out the reaction 4-imidazolone-5-propanoate + H2O = N-formimidoyl-L-glutamate. The protein operates within amino-acid degradation; L-histidine degradation into L-glutamate; N-formimidoyl-L-glutamate from L-histidine: step 3/3. Its function is as follows. Catalyzes the hydrolytic cleavage of the carbon-nitrogen bond in imidazolone-5-propanoate to yield N-formimidoyl-L-glutamate. It is the third step in the universal histidine degradation pathway. The sequence is that of Imidazolonepropionase from Burkholderia cenocepacia (strain HI2424).